A 418-amino-acid polypeptide reads, in one-letter code: MARAAFLFKTVGFGGLQNVPINDELSSHLLRAGNSPWQLTQFLDWISLGRGLATSALVPTAGSRYYQMSCLLSGTLQIPFRPNHRWGDIRFLRLVWSAPTLDGLVVAPPQVLAQPALQAQADRVYDCDDYPFLARDPRFKHRVYQQLSAVTLLNLTGFGPISYVRVDEDMWSGDVNQLLMNYFGHTFAEIAYTLCQASANRPWEYDGTYARMTQIVLSLFWLSYVGVIHQQNTYRTFYFQCNRRGDAAEVWILSCSLNHSAQIRPGNRSLFVMPTSPDWNMDVNLILSSTLTGCLCSGSQLPLIDNNSVPAVSRNIHGWTGRAGNQLHGFQVRRMVTEFCDRLRRDGVMTQAQQNQVEALADQTQQFKRDKLETWAREDDQYNQAHPNSTMFRTKPFTNAQWGRGNTGATSAAIAALI.

Belongs to the orthoreovirus sigma-1 protein family. In terms of assembly, interacts with protein mu-NS; in viral inclusions.

It is found in the virion. Its function is as follows. Inner capsid (core) component. This Reovirus type 3 (strain Dearing) (T3D) protein is Inner capsid protein sigma-2 (S2).